Reading from the N-terminus, the 381-residue chain is Guanine nucleotide-binding protein G(s) subunit alpha (381 aa).

The S-palmitoyl cysteine moiety is linked to residue cysteine 3. In terms of domain architecture, G-alpha spans 36 to 381 (ALHRLLLLGA…RMHLQKYELL (346 aa)). Residues 39-52 (RLLLLGAGESGKST) form a G1 motif region. GTP contacts are provided by residues 44–51 (GAGESGKS), 183–189 (LRCRVLT), 208–212 (GVGGQ), 277–280 (NKQD), and alanine 353. Positions 51 and 189 each coordinate Mg(2+). The interval 181–189 (DILRCRVLT) is G2 motif. The segment at 204–213 (FYMFGVGGQR) is G3 motif. The tract at residues 273-280 (ILFLNKQD) is G4 motif. The interval 351 to 356 (TTAVDT) is G5 motif.

The protein belongs to the G-alpha family. G(s) subfamily. As to quaternary structure, g proteins are composed of 3 units; alpha, beta and gamma. The alpha chain contains the guanine nucleotide binding site.

Its function is as follows. Guanine nucleotide-binding proteins (G proteins) are involved as modulators or transducers in various transmembrane signaling systems. The G(s) protein is involved in hormonal regulation of adenylate cyclase: it activates the cyclase in response to beta-adrenergic stimuli. The protein is Guanine nucleotide-binding protein G(s) subunit alpha of Geodia cydonium (Sponge).